Reading from the N-terminus, the 557-residue chain is Thermosome subunit 2 (557 aa).

The tract at residues 527-557 is disordered; the sequence is DLSTGGDDDEEGGAPGGMGGMGGMGGMGGAM. Positions 539-557 are enriched in gly residues; sequence GAPGGMGGMGGMGGMGGAM.

Belongs to the TCP-1 chaperonin family. In terms of assembly, the thermosome or CCT complex is a oligomeric complex of two octameric double-ring structures; the complex is probably a heterooligomer of CCT1, CCT2 and CCT3 with yet unknown stoichiometry.

In terms of biological role, molecular chaperone that assists in the folding or refolding of nascent or denatured proteins along with ATP hydrolysis. ATPase activity is highest in thermosome assemblies containing CCT1:CCT2, followed by assemblies containing CCT1:CCT2:CCT3. Seems to contribute to thermosome ATPase activity. Not required for growth. This is Thermosome subunit 2 (cct2) from Haloferax volcanii (strain ATCC 29605 / DSM 3757 / JCM 8879 / NBRC 14742 / NCIMB 2012 / VKM B-1768 / DS2) (Halobacterium volcanii).